Reading from the N-terminus, the 344-residue chain is Dihydroorotate dehydrogenase (quinone) (344 aa).

FMN contacts are provided by residues 64–68 (AGLDK) and Thr-88. Lys-68 lines the substrate pocket. Position 113–117 (113–117 (NRMGF)) interacts with substrate. Asn-144 and Asn-177 together coordinate FMN. A substrate-binding site is contributed by Asn-177. Ser-180 acts as the Nucleophile in catalysis. Asn-182 provides a ligand contact to substrate. Lys-222 and Thr-250 together coordinate FMN. Residue 251–252 (NT) coordinates substrate. FMN contacts are provided by residues Gly-273, Gly-302, and 323-324 (YS).

The protein belongs to the dihydroorotate dehydrogenase family. Type 2 subfamily. As to quaternary structure, monomer. It depends on FMN as a cofactor.

It localises to the cell membrane. The catalysed reaction is (S)-dihydroorotate + a quinone = orotate + a quinol. It functions in the pathway pyrimidine metabolism; UMP biosynthesis via de novo pathway; orotate from (S)-dihydroorotate (quinone route): step 1/1. In terms of biological role, catalyzes the conversion of dihydroorotate to orotate with quinone as electron acceptor. This Polynucleobacter necessarius subsp. necessarius (strain STIR1) protein is Dihydroorotate dehydrogenase (quinone).